The following is a 558-amino-acid chain: Formate--tetrahydrofolate ligase (558 aa).

66-73 (TPAGEGKT) lines the ATP pocket.

Belongs to the formate--tetrahydrofolate ligase family.

The enzyme catalyses (6S)-5,6,7,8-tetrahydrofolate + formate + ATP = (6R)-10-formyltetrahydrofolate + ADP + phosphate. The protein operates within one-carbon metabolism; tetrahydrofolate interconversion. The sequence is that of Formate--tetrahydrofolate ligase from Neisseria meningitidis serogroup A / serotype 4A (strain DSM 15465 / Z2491).